Consider the following 383-residue polypeptide: Chitinase-3-like protein 1 (383 aa).

An N-terminal signal peptide occupies residues 1–21 (MGLRAAHTGFVVLVLLQSCAA). The region spanning 22–383 (YKLICYYTSW…SAIKDVLARV (362 aa)) is the GH18 domain. Cys26 and Cys51 form a disulfide bridge. An N-linked (GlcNAc...) asparagine glycan is attached at Asn60. Chitin contacts are provided by residues 70–71 (EW), 97–100 (GGWN), Tyr141, 204–207 (LTYD), and Arg263. Residues Cys300 and Cys364 are joined by a disulfide bond. The interval 324–338 (QWVAYDDQESVKNKA) is important for AKT1 activation and IL8 production. Trp352 is a binding site for chitin. A glycan (N-linked (GlcNAc...) asparagine) is linked at Asn367.

The protein belongs to the glycosyl hydrolase 18 family. In terms of assembly, monomer. Post-translationally, glycosylated. Mammary secretions collected during the non-lactating period.

The protein localises to the secreted. It is found in the extracellular space. The protein resides in the cytoplasm. Its subcellular location is the perinuclear region. It localises to the endoplasmic reticulum. Carbohydrate-binding lectin with a preference for chitin. Has no chitinase activity. May play a role in tissue remodeling and in the capacity of cells to respond to and cope with changes in their environment. Plays a role in T-helper cell type 2 (Th2) inflammatory response and IL-13-induced inflammation, regulating allergen sensitization, inflammatory cell apoptosis, dendritic cell accumulation and M2 macrophage differentiation. Facilitates invasion of pathogenic enteric bacteria into colonic mucosa and lymphoid organs. Mediates activation of AKT1 signaling pathway and subsequent IL8 production in colonic epithelial cells. Regulates antibacterial responses in lung by contributing to macrophage bacterial killing, controlling bacterial dissemination and augmenting host tolerance. Also regulates hyperoxia-induced injury, inflammation and epithelial apoptosis in lung. This is Chitinase-3-like protein 1 (CHI3L1) from Bos taurus (Bovine).